Here is a 227-residue protein sequence, read N- to C-terminus: C4-dicarboxylate TRAP transporter small permease protein DctQ (227 aa).

Residues 1–7 (MLRILDR) are Cytoplasmic-facing. A helical transmembrane segment spans residues 8–28 (AEEVLIAALIATATVLIFVSV). The Periplasmic segment spans residues 29 to 67 (THRFTLGFVADFVGFFRGHGMTGAAAAAKSLYTTLRGIN). Residues 68 to 88 (LVWAQELCIILFVWMAKFGAA) traverse the membrane as a helical segment. The Cytoplasmic segment spans residues 89–112 (YGVRTGIHVGIDVLINRLDAPKRR). The helical transmembrane segment at 113–133 (FFILLGLGAGALFTGIIATLG) threads the bilayer. Topologically, residues 134–149 (ANFVLHMYHASSTSPD) are periplasmic. A helical membrane pass occupies residues 150 to 170 (LELPMWLVYLAIPMGSSLMCF). Residues 171–227 (RFLQVAFGFARTGELPHHDHGHVDGVDTENEGIDAEGDVLLHSPLTPRDLVEKPKDN) are Cytoplasmic-facing.

It belongs to the TRAP transporter small permease family. In terms of assembly, the complex comprises the extracytoplasmic solute receptor protein DctP, and the two transmembrane proteins DctQ and DctM.

It is found in the cell inner membrane. Its function is as follows. Part of the tripartite ATP-independent periplasmic (TRAP) transport system DctPQM involved in C4-dicarboxylates uptake. The chain is C4-dicarboxylate TRAP transporter small permease protein DctQ from Rhodobacter capsulatus (Rhodopseudomonas capsulata).